Consider the following 337-residue polypeptide: Cytochrome P450 monooxygenase dpmpJ (337 aa).

Residues 4–24 form a helical membrane-spanning segment; sequence LILHHPYASLAAGILLYFFCL. The N-linked (GlcNAc...) asparagine glycan is linked to Asn-158.

The protein belongs to the cytochrome P450 family. Heme serves as cofactor.

The protein resides in the membrane. Its pathway is secondary metabolite biosynthesis; terpenoid biosynthesis. Functionally, cytochrome P450 monooxygenase; part of the gene cluster that mediates the biosynthesis of diterpenoid pyrones. The first step of the pathway is the synthesis of the alpha-pyrone moiety by the polyketide synthase dpmpA via condensation of one acetyl-CoA starter unit with 3 malonyl-CoA units and 2 methylations. The alpha-pyrone is then combined with geranylgeranyl pyrophosphate (GGPP) formed by the GGPP synthase dpmpD through the action of the prenyltransferase dpmpC to yield a linear alpha-pyrone diterpenoid. Subsequent steps in the diterpenoid pyrone biosynthetic pathway involve the decalin core formation, which is initiated by the epoxidation of the C10-C11 olefin by the FAD-dependent oxidoreductase dpmpE, and is followed by a cyclization cascade catalyzed by the terpene cyclase dpmpB. The short chain dehydrogenase/reductase dpmpG then oxidizes the 8S hydroxy group to a ketone and the short chain dehydrogenase/reductase dpmpH reduces the ketone to the 8R hydroxy group to yield higginsianin B. Higginsianin B is further methylated by the methyltransferase dpmpI to produce the intermediate named FDDP B. The cytochrome P450 monooxygenase dpmpJ then oxidizes the C-26 methyl to primary alcohol, producing the final diterpenoid pyrone with a C-26 primary alcohol on the gamma-pyrone moiety named FDDP C. The polypeptide is Cytochrome P450 monooxygenase dpmpJ (Macrophomina phaseolina (strain MS6) (Charcoal rot fungus)).